The sequence spans 392 residues: Alanine--glyoxylate aminotransferase (392 aa).

Lys-209 carries the post-translational modification N6-(pyridoxal phosphate)lysine. An N6-acetyllysine; alternate modification is found at Lys-225. Lys-225 carries the post-translational modification N6-succinyllysine; alternate. N6-acetyllysine occurs at positions 234 and 312. Arg-360 is a substrate binding site. The Microbody targeting signal motif lies at Lys-390–Leu-392.

This sequence belongs to the class-V pyridoxal-phosphate-dependent aminotransferase family. In terms of assembly, homodimer. Requires pyridoxal 5'-phosphate as cofactor.

The protein localises to the peroxisome. It carries out the reaction L-serine + pyruvate = 3-hydroxypyruvate + L-alanine. It catalyses the reaction glyoxylate + L-alanine = glycine + pyruvate. In terms of biological role, peroxisomal aminotransferase that catalyzes the transamination of glyoxylate to glycine and contributes to the glyoxylate detoxification. Also catalyzes the transamination between L-serine and pyruvate and contributes to gluconeogenesis from the L-serine metabolism. The polypeptide is Alanine--glyoxylate aminotransferase (Pongo abelii (Sumatran orangutan)).